We begin with the raw amino-acid sequence, 214 residues long: tRNA (guanine-N(7)-)-methyltransferase (214 aa).

Residues D35, E60, N87, and D113 each contribute to the S-adenosyl-L-methionine site. Residue D113 is part of the active site. Substrate is bound by residues K117 and D149.

It belongs to the class I-like SAM-binding methyltransferase superfamily. TrmB family.

The catalysed reaction is guanosine(46) in tRNA + S-adenosyl-L-methionine = N(7)-methylguanosine(46) in tRNA + S-adenosyl-L-homocysteine. The protein operates within tRNA modification; N(7)-methylguanine-tRNA biosynthesis. Its function is as follows. Catalyzes the formation of N(7)-methylguanine at position 46 (m7G46) in tRNA. The chain is tRNA (guanine-N(7)-)-methyltransferase from Prochlorococcus marinus (strain NATL2A).